A 44-amino-acid chain; its full sequence is Small, acid-soluble spore protein N (44 aa).

The tract at residues 1 to 44 is disordered; it reads MGNPKKNSKDFVPNHIGTQSKKAGGNKGKQMQDTTGKQPIVDNG.

The protein belongs to the SspN family.

It is found in the spore core. The polypeptide is Small, acid-soluble spore protein N (Bacillus cytotoxicus (strain DSM 22905 / CIP 110041 / 391-98 / NVH 391-98)).